Consider the following 766-residue polypeptide: Slit homolog 2 protein (766 aa).

An N-terminal signal peptide occupies residues 1–30 (MSGIGWQTLSLSLALVLSILNKVAPHACPA). The LRRNT domain occupies 31-55 (QCSCSGSTVDCHGLALRIVPRNIPR). LRR repeat units follow at residues 56-77 (NTER…DFAG), 80-101 (HLRI…AFHD), 104-125 (ELER…LFLG), 128-149 (KLYR…AFRG), 152-173 (DIKN…AFRA), and 176-197 (DLEV…SFNH). Asparagine 66 carries N-linked (GlcNAc...) asparagine glycosylation. N-linked (GlcNAc...) asparagine glycosylation is present at asparagine 186. Positions 209-259 (NNLYCDCHLAWLSDWLRQRPRVGLYTQCMGPSHLRGHNVAEVQKREFVCSD) constitute an LRRCT 1 domain. Residues 268 to 304 (MAPSCSVLHCPIACTCSNNIVDCRGKGLTEIPTNLPE) enclose the LRRNT 2 domain. Cysteine 281 and cysteine 290 form a disulfide bridge. 5 LRR repeats span residues 305–326 (TITE…AFSP), 329–350 (KLRR…AFQG), 353–374 (SLNS…LFEG), 377–398 (SLQL…AFQD), and 401–422 (NLNL…TFSA). Residues 434 to 484 (NPFICDCHLKWLADYLHTNPIETSGARCTSPRRLANKRIGQIKSKKFRCSG) form the LRRCT 2 domain. 4 disulfide bridges follow: cysteine 438-cysteine 461, cysteine 440-cysteine 482, cysteine 502-cysteine 508, and cysteine 506-cysteine 515. The LRRNT 3 domain occupies 493-529 (SGDCFADLACPEKCRCEGTTVDCSNQKLNKIPDHIPQ). 5 LRR repeats span residues 530–551 (YTAE…GIFK), 555–576 (QLRK…AFEG), 579–600 (GVNE…MFKG), 603–624 (SLKT…SFTG), and 627–648 (SVRL…AFGT). N-linked (GlcNAc...) asparagine glycosylation is present at asparagine 560. N-linked (GlcNAc...) asparagine glycosylation is present at asparagine 619. One can recognise an LRRCT 3 domain in the interval 660–710 (NPFNCNCHLAWLGEWLRRKRIVTGNPRCQKPYFLKEIPIQDVAIQDFTCDD). Cystine bridges form between cysteine 664/cysteine 687, cysteine 666/cysteine 708, cysteine 723/cysteine 729, and cysteine 727/cysteine 736. In terms of domain architecture, LRRNT 4 spans 714–750 (DNSCSPLSRCPSECTCLDTVVRCSNKGLKVLPKGIPR).

As to quaternary structure, homodimer. Binds ROBO1 and ROBO2 with high affinity. Interacts with GREM1.

It localises to the secreted. Its function is as follows. Thought to act as molecular guidance cue in cellular migration, and function appears to be mediated by interaction with roundabout homolog receptors. During neural development involved in axonal navigation at the ventral midline of the neural tube and projection of axons to different regions. SLIT1 and SLIT2 seem to be essential for midline guidance in the forebrain by acting as repulsive signal preventing inappropriate midline crossing by axons projecting from the olfactory bulb. In spinal cord development may play a role in guiding commissural axons once they reached the floor plate by modulating the response to netrin. In vitro, silences the attractive effect of NTN1 but not its growth-stimulatory effect and silencing requires the formation of a ROBO1-DCC complex. May be implicated in spinal cord midline post-crossing axon repulsion. In vitro, only commissural axons that crossed the midline responded to SLIT2. In the developing visual system appears to function as repellent for retinal ganglion axons by providing a repulsion that directs these axons along their appropriate paths prior to, and after passage through, the optic chiasm. In vitro, collapses and repels retinal ganglion cell growth cones. Seems to play a role in branching and arborization of CNS sensory axons, and in neuronal cell migration. Seems to be involved in regulating leukocyte migration. This Rattus norvegicus (Rat) protein is Slit homolog 2 protein (Slit2).